A 534-amino-acid chain; its full sequence is Inosine-5'-monophosphate dehydrogenase (534 aa).

CBS domains lie at 117–181 (YVMQ…GTPI) and 190–255 (TTPI…PMAS). Residues 292–294 (DSS) and 342–344 (GMG) each bind NAD(+). Residues Gly-344 and Gly-346 each coordinate K(+). Ser-347 is an IMP binding site. Cys-349 contacts K(+). Cys-349 functions as the Thioimidate intermediate in the catalytic mechanism. Residues 382 to 384 (DGG), 405 to 406 (GG), and 430 to 434 (YRGMG) each bind IMP. Arg-448 functions as the Proton acceptor in the catalytic mechanism. IMP is bound at residue Gln-461. K(+) is bound by residues Glu-520, Gly-521, and Gly-522.

The protein belongs to the IMPDH/GMPR family. Homotetramer. K(+) serves as cofactor.

Its subcellular location is the cytoplasm. It catalyses the reaction IMP + NAD(+) + H2O = XMP + NADH + H(+). Its pathway is purine metabolism; XMP biosynthesis via de novo pathway; XMP from IMP: step 1/1. With respect to regulation, mycophenolic acid (MPA) is a non-competitive inhibitor that prevents formation of the closed enzyme conformation by binding to the same site as the amobile flap. In contrast, mizoribine monophosphate (MZP) is a competitive inhibitor that induces the closed conformation. MPA is a potent inhibitor of mammalian IMPDHs but a poor inhibitor of the bacterial enzymes. MZP is a more potent inhibitor of bacterial IMPDH. Its function is as follows. Catalyzes the conversion of inosine 5'-phosphate (IMP) to xanthosine 5'-phosphate (XMP), the first committed and rate-limiting step in the de novo synthesis of guanine nucleotides, and therefore plays an important role in the regulation of cell growth. The chain is Inosine-5'-monophosphate dehydrogenase from Caenorhabditis elegans.